Here is a 164-residue protein sequence, read N- to C-terminus: Phosphatidyl-N-methylethanolamine N-methyltransferase (164 aa).

The segment at residues 1–21 (MGLLAAIGVLLPFPFYWWLWT) is an intramembrane region (helical). Residues 22–30 (NAQSWVNLC) lie on the Lumenal side of the membrane. Residues 31 to 52 (GRERDPSTVMARVSHVLKAAQL) form a helical membrane-spanning segment. Topologically, residues 53–69 (LSLFSVASLSWPPPLYF) are cytoplasmic. A helical membrane pass occupies residues 70 to 90 (WPLMAFGQFLNFRVYQLLGEA). Position 74–76 (74–76 (AFG)) interacts with S-adenosyl-L-methionine. The Lumenal portion of the chain corresponds to 91–131 (GTYYGVRFGKNIPWVTEFPFGVIRDPQYVGSIMSLLACLSW). Residues 132–151 (VPFQYILLWSLGYVFMMFLE) traverse the membrane as a helical segment. The Cytoplasmic portion of the chain corresponds to 152–164 (SKEDPNARAKSIS). Position 154–155 (154–155 (ED)) interacts with S-adenosyl-L-methionine.

It belongs to the class VI-like SAM-binding methyltransferase superfamily. PEMT/PEM2 methyltransferase family.

It is found in the endoplasmic reticulum membrane. It catalyses the reaction a 1,2-diacyl-sn-glycero-3-phospho-N-methylethanolamine + S-adenosyl-L-methionine = a 1,2-diacyl-sn-glycero-3-phospho-N,N-dimethylethanolamine + S-adenosyl-L-homocysteine + H(+). The enzyme catalyses a 1,2-diacyl-sn-glycero-3-phospho-N,N-dimethylethanolamine + S-adenosyl-L-methionine = a 1,2-diacyl-sn-glycero-3-phosphocholine + S-adenosyl-L-homocysteine + H(+). Its pathway is phospholipid metabolism; phosphatidylcholine biosynthesis. Its function is as follows. Catalyzes the second two steps of the methylation pathway of phosphatidylcholine biosynthesis, the SAM-dependent methylation of phosphatidylmonomethylethanolamine (PMME) to phosphatidyldimethylethanolamine (PDME) and of PDME to phosphatidylcholine (PC). This chain is Phosphatidyl-N-methylethanolamine N-methyltransferase (PLMT), found in Arabidopsis thaliana (Mouse-ear cress).